Reading from the N-terminus, the 94-residue chain is Co-chaperonin GroES (94 aa).

The protein belongs to the GroES chaperonin family. Heptamer of 7 subunits arranged in a ring. Interacts with the chaperonin GroEL.

It localises to the cytoplasm. In terms of biological role, together with the chaperonin GroEL, plays an essential role in assisting protein folding. The GroEL-GroES system forms a nano-cage that allows encapsulation of the non-native substrate proteins and provides a physical environment optimized to promote and accelerate protein folding. GroES binds to the apical surface of the GroEL ring, thereby capping the opening of the GroEL channel. This chain is Co-chaperonin GroES, found in Streptococcus pneumoniae (strain ATCC BAA-255 / R6).